The chain runs to 237 residues: UPF0173 metal-dependent hydrolase BCAN_B0597 (237 aa).

It belongs to the UPF0173 family.

The polypeptide is UPF0173 metal-dependent hydrolase BCAN_B0597 (Brucella canis (strain ATCC 23365 / NCTC 10854 / RM-666)).